The chain runs to 273 residues: MKKYYDIIENAYLKKNEVNTKNIDIETKQTIHHVIELLNSGKIRVAEKKDNIWITNQWIKKSILLYMYLNQNNVFQGSFSNYYDKIPLKYENYNEKKFKEERIRVVPPATIRYGSFINSNTIIMPSYVNIGAYVDQGTMIDTWTTVGSCAQIGKNVHLSGGVGIGGVLEPLQNNPTIIEDNCFIGARSEIVEGVIIEEGSVISMGVFIGQSTKIYNRETGEILYGRVPANSVVVSGSLPSKDRKYNLYAAVIVKRVDSKTLNKVEINQLLRDK.

Positions 104 and 141 each coordinate substrate.

Belongs to the transferase hexapeptide repeat family. In terms of assembly, homotrimer.

The protein localises to the cytoplasm. The catalysed reaction is (S)-2,3,4,5-tetrahydrodipicolinate + succinyl-CoA + H2O = (S)-2-succinylamino-6-oxoheptanedioate + CoA. Its pathway is amino-acid biosynthesis; L-lysine biosynthesis via DAP pathway; LL-2,6-diaminopimelate from (S)-tetrahydrodipicolinate (succinylase route): step 1/3. In Buchnera aphidicola subsp. Schizaphis graminum (strain Sg), this protein is 2,3,4,5-tetrahydropyridine-2,6-dicarboxylate N-succinyltransferase.